Consider the following 1228-residue polypeptide: Nitrate reductase alpha chain (1228 aa).

The region spanning 47–111 is the 4Fe-4S Mo/W bis-MGD-type domain; the sequence is DKVVRSTHGV…SFSWYIYSPL (65 aa). His54, Cys58, Cys62, and Cys97 together coordinate [4Fe-4S] cluster. Asp227 is a Mo-bis(molybdopterin guanine dinucleotide) binding site.

This sequence belongs to the prokaryotic molybdopterin-containing oxidoreductase family. [4Fe-4S] cluster is required as a cofactor. Requires Mo-bis(molybdopterin guanine dinucleotide) as cofactor.

It localises to the cell membrane. It carries out the reaction nitrate + a quinol = a quinone + nitrite + H2O. In terms of biological role, the alpha chain is the actual site of nitrate reduction. The chain is Nitrate reductase alpha chain (narG) from Bacillus subtilis (strain 168).